We begin with the raw amino-acid sequence, 727 residues long: UvrABC system protein C (727 aa).

Positions 16-95 constitute a GIY-YIG domain; sequence VDPGVYKFRD…IKEFDPRFNV (80 aa). Positions 208 to 243 constitute a UVR domain; it reads DRLVRQLEARMQEASEELDFETAARLRDDVGALRRA. 2 disordered regions span residues 503–527 and 679–727; these read DADQ…QTGR and SADV…TGVE. The segment covering 701-711 has biased composition (basic and acidic residues); that stretch reads NGADIPREPVE. Positions 718-727 are enriched in polar residues; it reads QSASQRTGVE.

The protein belongs to the UvrC family. Interacts with UvrB in an incision complex.

The protein resides in the cytoplasm. In terms of biological role, the UvrABC repair system catalyzes the recognition and processing of DNA lesions. UvrC both incises the 5' and 3' sides of the lesion. The N-terminal half is responsible for the 3' incision and the C-terminal half is responsible for the 5' incision. The chain is UvrABC system protein C from Rhodococcus jostii (strain RHA1).